Reading from the N-terminus, the 96-residue chain is DNA-directed RNA polymerase subunit Rpo11 (96 aa).

The protein belongs to the archaeal Rpo11/eukaryotic RPB11/RPC19 RNA polymerase subunit family. As to quaternary structure, part of the RNA polymerase complex.

It is found in the cytoplasm. It catalyses the reaction RNA(n) + a ribonucleoside 5'-triphosphate = RNA(n+1) + diphosphate. In terms of biological role, DNA-dependent RNA polymerase (RNAP) catalyzes the transcription of DNA into RNA using the four ribonucleoside triphosphates as substrates. The sequence is that of DNA-directed RNA polymerase subunit Rpo11 from Methanococcus maripaludis (strain C6 / ATCC BAA-1332).